A 49-amino-acid polypeptide reads, in one-letter code: uncharacterized protein (49 aa).

The chain crosses the membrane as a helical span at residues 5–27 (ILEILSAFIRILFKLLYCWALFF).

The protein resides in the membrane. This is an uncharacterized protein from Saccharomyces cerevisiae (strain ATCC 204508 / S288c) (Baker's yeast).